Consider the following 155-residue polypeptide: DNA gyrase inhibitor (155 aa).

The protein belongs to the DNA gyrase inhibitor family. Interacts with DNA gyrase.

The protein localises to the cytoplasm. In terms of biological role, inhibits the supercoiling activity of DNA gyrase. Acts by inhibiting DNA gyrase at an early step, prior to (or at the step of) binding of DNA by the gyrase. It protects cells against toxins that target DNA gyrase, by inhibiting activity of these toxins and reducing the formation of lethal double-strand breaks in the cell. In Salmonella arizonae (strain ATCC BAA-731 / CDC346-86 / RSK2980), this protein is DNA gyrase inhibitor.